The following is a 469-amino-acid chain: 3-isopropylmalate dehydratase large subunit (469 aa).

The [4Fe-4S] cluster site is built by Cys350, Cys410, and Cys413.

It belongs to the aconitase/IPM isomerase family. LeuC type 1 subfamily. In terms of assembly, heterodimer of LeuC and LeuD. It depends on [4Fe-4S] cluster as a cofactor.

The enzyme catalyses (2R,3S)-3-isopropylmalate = (2S)-2-isopropylmalate. Its pathway is amino-acid biosynthesis; L-leucine biosynthesis; L-leucine from 3-methyl-2-oxobutanoate: step 2/4. Its function is as follows. Catalyzes the isomerization between 2-isopropylmalate and 3-isopropylmalate, via the formation of 2-isopropylmaleate. This chain is 3-isopropylmalate dehydratase large subunit, found in Rhizobium etli (strain ATCC 51251 / DSM 11541 / JCM 21823 / NBRC 15573 / CFN 42).